The primary structure comprises 506 residues: 2-isopropylmalate synthase (506 aa).

Residues 4–266 (ILFMDTTLRD…EPSMTLKEIK (263 aa)) form the Pyruvate carboxyltransferase domain. Asp-13, His-201, His-203, and Asn-237 together coordinate Mn(2+). Residues 390–506 (NITQLQVHFV…KLKSFIQLVK (117 aa)) are regulatory domain.

This sequence belongs to the alpha-IPM synthase/homocitrate synthase family. LeuA type 1 subfamily. In terms of assembly, homodimer. It depends on Mn(2+) as a cofactor.

The protein localises to the cytoplasm. The enzyme catalyses 3-methyl-2-oxobutanoate + acetyl-CoA + H2O = (2S)-2-isopropylmalate + CoA + H(+). The protein operates within amino-acid biosynthesis; L-leucine biosynthesis; L-leucine from 3-methyl-2-oxobutanoate: step 1/4. Its function is as follows. Catalyzes the condensation of the acetyl group of acetyl-CoA with 3-methyl-2-oxobutanoate (2-ketoisovalerate) to form 3-carboxy-3-hydroxy-4-methylpentanoate (2-isopropylmalate). This Bacillus cereus (strain ATCC 10987 / NRS 248) protein is 2-isopropylmalate synthase.